The following is an 84-amino-acid chain: Small ribosomal subunit protein bS20 (84 aa).

It belongs to the bacterial ribosomal protein bS20 family.

Its function is as follows. Binds directly to 16S ribosomal RNA. The polypeptide is Small ribosomal subunit protein bS20 (Lactiplantibacillus plantarum (strain ATCC BAA-793 / NCIMB 8826 / WCFS1) (Lactobacillus plantarum)).